A 353-amino-acid chain; its full sequence is B1 bradykinin receptor (353 aa).

At 1-41 (MASQTLVVFQASNQSQLPPPNATLCDGAQEAWHLLHKVLPT) the chain is on the extracellular side. N-linked (GlcNAc...) asparagine glycans are attached at residues Asn13 and Asn21. The helical transmembrane segment at 42–62 (CVVAICSGGLLGNLFVLSVFL) threads the bilayer. At 63–72 (VPRRRLNAAE) the chain is on the cytoplasmic side. Residues 73-93 (IYLAHLAASDLVFALGLPFWA) form a helical membrane-spanning segment. Residues 94–110 (ETIRNGFHWPFGAPLCR) lie on the Extracellular side of the membrane. Cys109 and Cys189 form a disulfide bridge. The chain crosses the membrane as a helical span at residues 111-131 (VVNGVIKANLFISIFLVVAIS). Residues 132–154 (RDRYRALVHPVASWRRRRRRHWA) are Cytoplasmic-facing. The chain crosses the membrane as a helical span at residues 155-175 (QATCVLIWTAGGLLSIPTFLL). At 176 to 207 (RSVQVVPELNVSACVLPFPHEAWAFVRTVELN) the chain is on the extracellular side. Asn185 is a glycosylation site (N-linked (GlcNAc...) asparagine). The chain crosses the membrane as a helical span at residues 208–228 (VLGFLLPLAAILFFNYHILAA). Residues 229–251 (LRGREQLSRTRCGGPRDGKTTAL) are Cytoplasmic-facing. A helical membrane pass occupies residues 252–272 (ILTLVAVFLLCWTPYHVCAFL). The Extracellular segment spans residues 273-295 (EFLLHVRAIRGCFWEDFTDLGLQ). A helical transmembrane segment spans residues 296–316 (YTNFFAFINSCLNPVIYVFWG). Residues 317 to 353 (QLFRTKIWELYHRCLPRKLTAVSSSRRKEIFQIFWRN) are Cytoplasmic-facing. Cys330 is lipidated: S-palmitoyl cysteine.

This sequence belongs to the G-protein coupled receptor 1 family. Bradykinin receptor subfamily. BDKRB1 sub-subfamily.

It is found in the cell membrane. Its function is as follows. This is a receptor for bradykinin. Could be a factor in chronic pain and inflammation. This chain is B1 bradykinin receptor (BDKRB1), found in Sus scrofa (Pig).